The sequence spans 1410 residues: Slit homolog 1 protein (1410 aa).

The signal sequence occupies residues 1–16 (MLICFIFILLIPESAT). In terms of domain architecture, LRRNT 1 spans 17-43 (CPAECVCVDRTVSCVGQQLTEVPQNIP). LRR repeat units follow at residues 22–42 (VCVD…PQNI), 43–66 (PNDT…DFSS), 67–90 (LMNL…SFSS), 91–114 (LVFL…VFQN), 116–138 (LKLT…QLQG), 140–162 (EFLE…VISS), 163–186 (WVSL…SNAR), 219–242 (TVCA…FMTC), 286–309 (PPST…SFKN), 310–333 (LKNL…AFLG), 335–357 (HNLH…TFEG), 358–381 (LGSL…TFDH), 383–405 (PKLS…TFQN), 407–430 (TSLS…WLAQ), 442–465 (ARCE…KFKC), 489–510 (CDCY…PTSI), 511–535 (PRFA…NIHV), 536–559 (LENL…SFEK), 561–583 (SKLR…VLDE), and 585–607 (SNLE…FFNK). The 49-residue stretch at 195-243 (NPWNCDCRLRWMRKWLEKAEGQNKTVCATPLNLQGSSIEILQDKFMTCS) folds into the LRRCT 1 domain. The LRRNT 2 domain maps to 259 to 286 (ICPLPCTCTGTTVDCRDSGLTYVPTNLP). The 50-residue stretch at 417–466 (NPLICDCNLQWLAQINLQKNIETSGARCEQPKRLRKKKFATLPPNKFKCK) folds into the LRRCT 2 domain. In terms of domain architecture, LRRNT 3 spans 484-511 (ICPTQCDCYGTTVDCNKRGLNTIPTSIP). The 53-residue stretch at 619–671 (NDLLCDCRILPLMSWLRSNSSHSIDIPPCQQFQYSDNESDKQRCAAFPEETCS) folds into the LRRCT 3 domain. The LRRNT 4 domain maps to 677-703 (CPPKCSCLDRVVRCSNKNLTSFPSRIP). LRR repeat units follow at residues 681–703 (CSCL…SRIP), 704–726 (FDTT…DLNR), 727–750 (LYSL…TFSN), 752–774 (TRLS…AFNG), 775–798 (LNAL…AFSN), and 800–823 (TSIT…WFSK). Positions 810 to 859 (NSLYCDCNMAWFSKWIKSKFIEAGIARCEYPNTVSNQLLLTAQPYQFTCD) constitute an LRRCT 4 domain. EGF-like domains follow at residues 871-906 (DLCL…VHCE) and 908-945 (QIDA…DYCE). Intrachain disulfides connect Cys-873–Cys-884, Cys-878–Cys-894, Cys-896–Cys-905, Cys-912–Cys-923, Cys-917–Cys-933, Cys-935–Cys-944, Cys-951–Cys-962, Cys-956–Cys-971, Cys-973–Cys-982, Cys-989–Cys-1002, Cys-996–Cys-1011, Cys-1013–Cys-1022, Cys-1029–Cys-1040, Cys-1034–Cys-1049, Cys-1051–Cys-1060, Cys-1076–Cys-1086, Cys-1081–Cys-1097, and Cys-1099–Cys-1108. The 37-residue stretch at 947-983 (NIDDCVNSKCENGGKCVDLINSYRCDCPMEYEGKHCE) folds into the EGF-like 1; calcium-binding domain. In terms of domain architecture, EGF-like 3 spans 985–1023 (KLEYCTKKLNPCENNGKCIPINGSYSCMCSPGFTGNNCE). The 37-residue stretch at 1025-1061 (NIDDCKNVECQNGGSCVDGILSYDCLCRPGYAGQYCE) folds into the EGF-like 2; calcium-binding domain. In terms of domain architecture, EGF-like 4 spans 1072–1109 (KTDACQQSACGQGECVASQNSSDFTCKCHEGFSGPSCD). One can recognise a Laminin G-like domain in the interval 1112 to 1285 (MSVGFKNPGA…LENVNTEQSC (174 aa)). The stretch at 1197-1221 (TSERKCFLQIDKNPVQIVENSGKSD) is one LRR 27 repeat. 8 disulfide bridges follow: Cys-1259–Cys-1285, Cys-1292–Cys-1302, Cys-1297–Cys-1314, Cys-1316–Cys-1325, Cys-1332–Cys-1368, Cys-1346–Cys-1382, Cys-1357–Cys-1398, and Cys-1361–Cys-1400. The region spanning 1288–1326 (TVNFCAGIDCGNGKCTNNALSPKGYMCQCDSHFSGEHCD) is the EGF-like 5 domain. Residues 1332–1406 (CDKQKFRRHH…QCQCEPTKSV (75 aa)) enclose the CTCK domain.

As to quaternary structure, interacts with eva-1.

The protein localises to the secreted. In terms of biological role, functions as a ligand for sax-3 receptor during larval development. Acts via the sax-3/Robo receptor to direct ventral axon guidance and guidance at the midline during embryonic development. In Caenorhabditis elegans, this protein is Slit homolog 1 protein (slt-1).